We begin with the raw amino-acid sequence, 254 residues long: Leucyl/phenylalanyl-tRNA--protein transferase (254 aa).

Belongs to the L/F-transferase family.

It is found in the cytoplasm. The enzyme catalyses N-terminal L-lysyl-[protein] + L-leucyl-tRNA(Leu) = N-terminal L-leucyl-L-lysyl-[protein] + tRNA(Leu) + H(+). It carries out the reaction N-terminal L-arginyl-[protein] + L-leucyl-tRNA(Leu) = N-terminal L-leucyl-L-arginyl-[protein] + tRNA(Leu) + H(+). It catalyses the reaction L-phenylalanyl-tRNA(Phe) + an N-terminal L-alpha-aminoacyl-[protein] = an N-terminal L-phenylalanyl-L-alpha-aminoacyl-[protein] + tRNA(Phe). In terms of biological role, functions in the N-end rule pathway of protein degradation where it conjugates Leu, Phe and, less efficiently, Met from aminoacyl-tRNAs to the N-termini of proteins containing an N-terminal arginine or lysine. This Burkholderia ambifaria (strain MC40-6) protein is Leucyl/phenylalanyl-tRNA--protein transferase.